The primary structure comprises 367 residues: 3-isopropylmalate dehydrogenase (367 aa).

77–90 (GPKYDDLDFSVKPE) lines the NAD(+) pocket. Residues Arg-97, Arg-107, Arg-135, and Asp-224 each contribute to the substrate site. Residues Asp-224, Asp-248, and Asp-252 each contribute to the Mg(2+) site. Residue 287–299 (GSAPDIAGQGKAN) participates in NAD(+) binding.

It belongs to the isocitrate and isopropylmalate dehydrogenases family. LeuB type 1 subfamily. As to quaternary structure, homodimer. Mg(2+) is required as a cofactor. Mn(2+) serves as cofactor.

It localises to the cytoplasm. The enzyme catalyses (2R,3S)-3-isopropylmalate + NAD(+) = 4-methyl-2-oxopentanoate + CO2 + NADH. The protein operates within amino-acid biosynthesis; L-leucine biosynthesis; L-leucine from 3-methyl-2-oxobutanoate: step 3/4. Catalyzes the oxidation of 3-carboxy-2-hydroxy-4-methylpentanoate (3-isopropylmalate) to 3-carboxy-4-methyl-2-oxopentanoate. The product decarboxylates to 4-methyl-2 oxopentanoate. In Ruegeria pomeroyi (strain ATCC 700808 / DSM 15171 / DSS-3) (Silicibacter pomeroyi), this protein is 3-isopropylmalate dehydrogenase.